The primary structure comprises 218 residues: ATP-dependent dethiobiotin synthetase BioD (218 aa).

10 to 15 (NAGKTT) contacts ATP. Threonine 14 contributes to the Mg(2+) binding site. Lysine 35 is an active-site residue. Threonine 39 lines the substrate pocket. Glutamate 116 contacts Mg(2+). Residues 116–119 (EGAG) and 176–177 (LR) each bind ATP.

The protein belongs to the dethiobiotin synthetase family. In terms of assembly, homodimer. The cofactor is Mg(2+).

It is found in the cytoplasm. The catalysed reaction is (7R,8S)-7,8-diammoniononanoate + CO2 + ATP = (4R,5S)-dethiobiotin + ADP + phosphate + 3 H(+). It participates in cofactor biosynthesis; biotin biosynthesis; biotin from 7,8-diaminononanoate: step 1/2. Functionally, catalyzes a mechanistically unusual reaction, the ATP-dependent insertion of CO2 between the N7 and N8 nitrogen atoms of 7,8-diaminopelargonic acid (DAPA, also called 7,8-diammoniononanoate) to form a ureido ring. This Helicobacter pylori (strain J99 / ATCC 700824) (Campylobacter pylori J99) protein is ATP-dependent dethiobiotin synthetase BioD.